A 460-amino-acid chain; its full sequence is tRNA modification GTPase MnmE (460 aa).

Residues Arg-29, Glu-91, and Lys-132 each coordinate (6S)-5-formyl-5,6,7,8-tetrahydrofolate. The region spanning 227–383 (GISIALIGKT…LIDTIIKKCG (157 aa)) is the TrmE-type G domain. A K(+)-binding site is contributed by Asn-237. Residues 237–242 (NVGKSS), 256–262 (TNIPGTT), and 281–284 (DTAG) contribute to the GTP site. A Mg(2+)-binding site is contributed by Ser-241. K(+) contacts are provided by Thr-256, Ile-258, and Thr-261. Residue Thr-262 coordinates Mg(2+). A (6S)-5-formyl-5,6,7,8-tetrahydrofolate-binding site is contributed by Lys-460.

Belongs to the TRAFAC class TrmE-Era-EngA-EngB-Septin-like GTPase superfamily. TrmE GTPase family. As to quaternary structure, homodimer. Heterotetramer of two MnmE and two MnmG subunits. The cofactor is K(+).

It localises to the cytoplasm. Exhibits a very high intrinsic GTPase hydrolysis rate. Involved in the addition of a carboxymethylaminomethyl (cmnm) group at the wobble position (U34) of certain tRNAs, forming tRNA-cmnm(5)s(2)U34. In Prochlorococcus marinus (strain MIT 9312), this protein is tRNA modification GTPase MnmE.